Here is a 343-residue protein sequence, read N- to C-terminus: Peptide methionine sulfoxide reductase msrA/msrB (343 aa).

Positions 21–174 (KVIYLAGGCF…PNGYCHIDLK (154 aa)) are peptide methionine sulfoxide reductase A. Cys-29 serves as the catalytic Cysteine sulfenic acid (-SOH) intermediate. Positions 191–314 (DEVLKKKLTQ…NSASLRFIPL (124 aa)) constitute a MsrB domain. Cys-303 (nucleophile) is an active-site residue.

It in the N-terminal section; belongs to the MsrA Met sulfoxide reductase family. This sequence in the C-terminal section; belongs to the MsrB Met sulfoxide reductase family.

The enzyme catalyses L-methionyl-[protein] + [thioredoxin]-disulfide + H2O = L-methionyl-(S)-S-oxide-[protein] + [thioredoxin]-dithiol. It carries out the reaction [thioredoxin]-disulfide + L-methionine + H2O = L-methionine (S)-S-oxide + [thioredoxin]-dithiol. The catalysed reaction is L-methionyl-[protein] + [thioredoxin]-disulfide + H2O = L-methionyl-(R)-S-oxide-[protein] + [thioredoxin]-dithiol. Its function is as follows. Has an important function as a repair enzyme for proteins that have been inactivated by oxidation. Catalyzes the reversible oxidation-reduction of methionine sulfoxide in proteins to methionine. The protein is Peptide methionine sulfoxide reductase msrA/msrB of Enterococcus faecalis (Streptococcus faecalis).